Here is a 183-residue protein sequence, read N- to C-terminus: MTIKREMRNDKRTAPKAPINENISAREVRLIGADGEQIGIVSIDEALRIADEAKLDLVEISADAQPPVCKVMDYGKHLFEKKKQANEAKKNQKQIQIKEIKFRPGTEEGDYQVKLRNLVRFLSDGDKAKISLRFRGREMAHQELGMELLKRVETDLAEYGTVEQHPKMEGRQLMMVIAPKKKK.

This sequence belongs to the IF-3 family. As to quaternary structure, monomer.

It is found in the cytoplasm. Its function is as follows. IF-3 binds to the 30S ribosomal subunit and shifts the equilibrium between 70S ribosomes and their 50S and 30S subunits in favor of the free subunits, thus enhancing the availability of 30S subunits on which protein synthesis initiation begins. This Pseudomonas entomophila (strain L48) protein is Translation initiation factor IF-3.